The sequence spans 414 residues: CinA-like protein (414 aa).

This sequence belongs to the CinA family.

This is CinA-like protein from Geobacter sp. (strain M21).